Reading from the N-terminus, the 181-residue chain is ATP synthase subunit b (181 aa).

Residues Leu-24–Val-44 traverse the membrane as a helical segment.

Belongs to the ATPase B chain family. As to quaternary structure, F-type ATPases have 2 components, F(1) - the catalytic core - and F(0) - the membrane proton channel. F(1) has five subunits: alpha(3), beta(3), gamma(1), delta(1), epsilon(1). F(0) has three main subunits: a(1), b(2) and c(10-14). The alpha and beta chains form an alternating ring which encloses part of the gamma chain. F(1) is attached to F(0) by a central stalk formed by the gamma and epsilon chains, while a peripheral stalk is formed by the delta and b chains.

The protein localises to the cell membrane. F(1)F(0) ATP synthase produces ATP from ADP in the presence of a proton or sodium gradient. F-type ATPases consist of two structural domains, F(1) containing the extramembraneous catalytic core and F(0) containing the membrane proton channel, linked together by a central stalk and a peripheral stalk. During catalysis, ATP synthesis in the catalytic domain of F(1) is coupled via a rotary mechanism of the central stalk subunits to proton translocation. In terms of biological role, component of the F(0) channel, it forms part of the peripheral stalk, linking F(1) to F(0). The polypeptide is ATP synthase subunit b (Mycoplasma mycoides subsp. mycoides SC (strain CCUG 32753 / NCTC 10114 / PG1)).